The sequence spans 866 residues: Transcription factor E2F8 (866 aa).

Phosphoserine is present on residues serine 71 and serine 102. 2 consecutive DNA-binding regions follow at residues 113-182 (RKEK…TWHG) and 261-347 (RKDK…KWTG). Disordered stretches follow at residues 409-429 (RKIN…STQN), 532-632 (TITP…STTL), and 794-837 (TNGQ…GSPC). A phosphoserine mark is found at serine 413 and serine 417. Residues 543–552 (VCPTTSSNAM) are compositionally biased toward polar residues. 2 stretches are compositionally biased toward basic and acidic residues: residues 588 to 603 (QGAK…EKGS) and 612 to 624 (SGSK…DQKA). Positions 794 to 805 (TNGQSFAGTGAQ) are enriched in polar residues. Residues 825–834 (TPGGPTKPTG) show a composition bias toward low complexity.

This sequence belongs to the E2F/DP family. As to quaternary structure, homodimer and heterodimer: mainly forms homodimers and, to a lesser extent, heterodimers with E2F8. Dimerization is important for DNA-binding. Interacts with HIF1A.

It is found in the nucleus. Atypical E2F transcription factor that participates in various processes such as angiogenesis and polyploidization of specialized cells. Mainly acts as a transcription repressor that binds DNA independently of DP proteins and specifically recognizes the E2 recognition site 5'-TTTC[CG]CGC-3'. Directly represses transcription of classical E2F transcription factors such as E2F1: component of a feedback loop in S phase by repressing the expression of E2F1, thereby preventing p53/TP53-dependent apoptosis. Plays a key role in polyploidization of cells in placenta and liver by regulating the endocycle, probably by repressing genes promoting cytokinesis and antagonizing action of classical E2F proteins (E2F1, E2F2 and/or E2F3). Required for placental development by promoting polyploidization of trophoblast giant cells. Acts as a promoter of sprouting angiogenesis, possibly by acting as a transcription activator: associates with HIF1A, recognizes and binds the VEGFA promoter, which is different from canonical E2 recognition site, and activates expression of the VEGFA gene. This Bos taurus (Bovine) protein is Transcription factor E2F8 (E2F8).